Reading from the N-terminus, the 1254-residue chain is Structural polyprotein (1254 aa).

Residues 1–33 (MFPFQPMYPMQPMPYRNPFAAPRRPWFPRTDPF) are necessary for nucleocapsid assembly and virus assembly. The interval 33–68 (FLAMQVQELTRSMANLTFKQRRGAPPEGPPAKKSKR) is host transcription inhibition. Residues 41–48 (LTRSMANL) carry the Supraphysiological nuclear export signal motif. N-linked (GlcNAc...) asparagine; by host glycosylation is present at Asn-47. Residues 48 to 118 (LTFKQRRGAP…KKPGKRQRMV (71 aa)) are disordered. The Nuclear localization signal signature appears at 64–68 (KKSKR). Residues 76-91 (GGQRKKKKNEGKKKAK) are compositionally biased toward basic residues. Residues 90–126 (AKTGPPNLKTQNGNKKKTNKKPGKRQRMVMKLESDKT) form a binding to the viral RNA region. A phosphothreonine mark is found at Thr-92 and Thr-107. Residues 103-117 (NKKKTNKKPGKRQRM) show a composition bias toward basic residues. Residues 111-125 (PGKRQRMVMKLESDK) form a ribosome-binding region. Phosphoserine is present on Ser-123. Residues 125–274 (KTFPIMLEGK…KYTPENCEQW (150 aa)) enclose the Peptidase S3 domain. At Thr-126 the chain carries Phosphothreonine. Catalysis depends on His-151, which acts as the Charge relay system. The interaction with spike glycoprotein E2 stretch occupies residues 167 to 172 (KKASKY). Residues Asp-173 and Ser-225 each act as charge relay system in the active site. Residues 259–263 (EKGVT) form an interaction with spike glycoprotein E2 region. The functions as an uncleaved signal peptide for the precursor of protein E3/E2 stretch occupies residues 275 to 286 (SLVTTMCLLANV). At 275-702 (SLVTTMCLLA…YHRYPMSTIT (428 aa)) the chain is on the extracellular side. 7 disulfides stabilise this stretch: Cys-281-Cys-290, Cys-352-Cys-456, Cys-355-Cys-360, Cys-423-Cys-437, Cys-484-Cys-599, Cys-533-Cys-559, and Cys-535-Cys-553. N-linked (GlcNAc...) asparagine; by host glycosylation occurs at Asn-285. 2 N-linked (GlcNAc...) asparagine; by host glycosylation sites follow: Asn-545 and Asn-651. Residues 703 to 723 (GLSICAAIVAVSIAASTWLLC) traverse the membrane as a helical segment. The segment at 724–728 (RSRAS) is interaction with the capsid protein. The Cytoplasmic portion of the chain corresponds to 724 to 756 (RSRASCLTPYRLTPNAKMPLCLAVLCCARSARA). Residues Cys-729, Cys-749, and Cys-750 are each lipidated (S-palmitoyl cysteine; by host). A disulfide bridge links Cys-729 with Cys-750. The interval 735–754 (LTPNAKMPLCLAVLCCARSA) is transient transmembrane before p62-6K protein processing. At 757–768 (ETTWESLDHLWN) the chain is on the extracellular side. Residues 769–789 (NNQQMFWTQLLIPLAALIVVT) form a helical membrane-spanning segment. Residue Arg-790 is a topological domain, cytoplasmic. The chain crosses the membrane as a helical span at residues 791-811 (LLKCMCCVVPFLVVAGAAGAG). The Extracellular portion of the chain corresponds to 812-1224 (AYEHATTMPN…SKTAWTWLTS (413 aa)). 4 disulfide bridges follow: Cys-861/Cys-926, Cys-874/Cys-906, Cys-875/Cys-908, and Cys-880/Cys-890. Residues 896-913 (VYPFMWGGAYCFCDTENT) are E1 fusion peptide loop. N-linked (GlcNAc...) asparagine; by host glycosylation is found at Asn-946 and Asn-1082. Cystine bridges form between Cys-1071–Cys-1083, Cys-1113–Cys-1188, Cys-1118–Cys-1192, and Cys-1140–Cys-1182. The helical transmembrane segment at 1225–1245 (LLGGSAVIIIIGLVLATLVAM) threads the bilayer. The Cytoplasmic portion of the chain corresponds to 1246–1254 (YVLTNQKHN).

In terms of assembly, homodimer. Homomultimer. Interacts with host karyopherin KPNA4; this interaction allows the nuclear import of the viral capsid protein. Interacts with spike glycoprotein E2. Interacts with host IRAK1; the interaction leads to inhibition of IRAK1-dependent signaling. Part of a tetrameric complex composed of host CRM1, host importin alpha/beta dimer and the viral capsid; this complex blocks the receptor-mediated transport through the nuclear pore. Interacts with host phosphatase PPP1CA; this interaction dephosphorylates the capsid protein, which increases its ability to bind to the viral genome. The precursor of protein E3/E2 and E1 form a heterodimer shortly after synthesis. As to quaternary structure, interacts with spike glycoprotein E2. The precursor of protein E3/E2 and E1 form a heterodimer shortly after synthesis. Processing of the precursor of protein E3/E2 into E2 and E3 results in a heterodimer of the spike glycoproteins E2 and E1. Spike at virion surface are constituted of three E2-E1 heterodimers. After target cell attachment and endocytosis, E1 change conformation to form homotrimers. Interacts with 6K protein. Interacts with host LDLRAD3; this interaction mediates viral entry to the host cell. In terms of assembly, interacts with spike glycoprotein E1. Processing of the precursor of protein E3/E2 into E2 and E3 results in a heterodimer of the spike glycoproteins E2 and E1. Spike at virion surface are constituted of a trimer of E2-E1 heterodimers. Interacts with 6K protein. Interacts with host LDLRAD3; this interaction mediates viral entry to the host cell. Oligomer. Interacts with spike glycoprotein E1. Interacts with spike glycoprotein E2. Structural polyprotein: Specific enzymatic cleavages in vivo yield mature proteins. Capsid protein is auto-cleaved during polyprotein translation, unmasking a signal peptide at the N-terminus of the precursor of E3/E2. The remaining polyprotein is then targeted to the host endoplasmic reticulum, where host signal peptidase cleaves it into pE2, 6K and E1 proteins. pE2 is further processed to mature E3 and E2 by host furin in trans-Golgi vesicle. In terms of processing, phosphorylated on serine and threonine residues. Post-translationally, palmitoylated via thioester bonds. These palmitoylations may induce disruption of the C-terminus transmembrane. This would result in the reorientation of E2 C-terminus from lumenal to cytoplasmic side. N-glycosylated. In terms of processing, palmitoylated via thioester bonds.

The protein localises to the virion. The protein resides in the host cytoplasm. It localises to the host cell membrane. Its subcellular location is the host nucleus. It is found in the virion membrane. The protein localises to the host Golgi apparatus. The protein resides in the host trans-Golgi network. It localises to the host endoplasmic reticulum. The enzyme catalyses Autocatalytic release of the core protein from the N-terminus of the togavirus structural polyprotein by hydrolysis of a -Trp-|-Ser- bond.. Forms an icosahedral capsid with a T=4 symmetry composed of 240 copies of the capsid protein surrounded by a lipid membrane through which penetrate 80 spikes composed of trimers of E1-E2 heterodimers. The capsid protein binds to the viral RNA genome at a site adjacent to a ribosome binding site for viral genome translation following genome release. Possesses a protease activity that results in its autocatalytic cleavage from the nascent structural protein. Following its self-cleavage, the capsid protein transiently associates with ribosomes, and within several minutes the protein binds to viral RNA and rapidly assembles into icosahedric core particles. The resulting nucleocapsid eventually associates with the cytoplasmic domain of the spike glycoprotein E2 at the cell membrane, leading to budding and formation of mature virions. In case of infection, new virions attach to target cells and after clathrin-mediated endocytosis their membrane fuses with the host endosomal membrane. This leads to the release of the nucleocapsid into the cytoplasm, followed by an uncoating event necessary for the genomic RNA to become accessible. The uncoating might be triggered by the interaction of capsid proteins with ribosomes. Binding of ribosomes would release the genomic RNA since the same region is genomic RNA-binding and ribosome-binding. Specifically inhibits interleukin-1 receptor-associated kinase 1/IRAK1-dependent signaling during viral entry, representing a means by which the alphaviruses may evade innate immune detection and activation prior to viral gene expression. Inhibits host transcription. Forms a tetrameric complex with XPO1/CRM1 and the nuclear import receptor importin. This complex blocks the central channel of host nuclear pores thereby inhibiting the receptor-mediated nuclear transport and thus the host mRNA and rRNA transcription. The inhibition of transcription is linked to a cytopathic effect on the host cell. Functionally, provides the signal sequence for the translocation of the precursor of protein E3/E2 to the host endoplasmic reticulum. Furin-cleaved E3 remains associated with spike glycoprotein E1 and mediates pH protection of the latter during the transport via the secretory pathway. After virion release from the host cell, the assembly protein E3 is gradually released in the extracellular space. Its function is as follows. Plays a role in viral attachment to target host cell, by binding to the cell receptor LDLRAD3. Synthesized as a p62 precursor which is processed by furin at the cell membrane just before virion budding, giving rise to E2-E1 heterodimer. The p62-E1 heterodimer is stable, whereas E2-E1 is unstable and dissociate at low pH. p62 is processed at the last step, presumably to avoid E1 fusion activation before its final export to cell surface. E2 C-terminus contains a transitory transmembrane that would be disrupted by palmitoylation, resulting in reorientation of the C-terminal tail from lumenal to cytoplasmic side. This step is critical since E2 C-terminus is involved in budding by interacting with capsid proteins. This release of E2 C-terminus in cytoplasm occurs lately in protein export, and precludes premature assembly of particles at the endoplasmic reticulum membrane. In terms of biological role, acts as a viroporin that participates in virus glycoprotein processing and transport to the plasma membrane, cell permeabilization and budding of viral particles. Disrupts the calcium homeostasis of the cell, probably at the endoplasmic reticulum level. This leads to cytoplasmic calcium elevation. Because of its lipophilic properties, the 6K protein is postulated to influence the selection of lipids that interact with the transmembrane domains of the glycoproteins, which, in turn, affects the deformability of the bilayer required for the extreme curvature that occurs as budding proceeds. Present in low amount in virions, about 3% compared to viral glycoproteins. Class II viral fusion protein. Fusion activity is inactive as long as E1 is bound to E2 in mature virion. After virus attachment to cell receptor LDLRAD3 and endocytosis, acidification of the endosome induce dissociation of E1/E2 heterodimer and concomitant trimerization of the E1 subunits. This E1 trimer is fusion active, and promotes release of viral nucleocapsid in cytoplasm after endosome and viral membrane fusion. Efficient fusion requires the presence of cholesterol and sphingolipid in the target membrane. In Venezuelan equine encephalitis virus (strain Everglades Fe3-7c) (VEEV), this protein is Structural polyprotein.